The following is a 143-amino-acid chain: Transcriptional regulator MraZ (143 aa).

SpoVT-AbrB domains are found at residues 5–47 and 76–119; these read EYQH…PKEE and AGEC…SRER.

It belongs to the MraZ family. Forms oligomers.

It localises to the cytoplasm. It is found in the nucleoid. The polypeptide is Transcriptional regulator MraZ (Heliobacterium modesticaldum (strain ATCC 51547 / Ice1)).